The primary structure comprises 329 residues: BTB/POZ domain-containing adapter for CUL3-mediated RhoA degradation protein 1 (329 aa).

Residues 1–15 are compositionally biased toward low complexity; sequence MSAEASGPAAAEAPS. A disordered region spans residues 1–21; that stretch reads MSAEASGPAAAEAPSLEVAKP. The BTB domain occupies 41 to 109; it reads KYVKLNVGGS…LRDGSVPLPE (69 aa). A disordered region spans residues 280–302; the sequence is LEATGGAAGGGGASRGEDEDNRE.

It belongs to the BACURD family. Homotetramer; forms a two-fold symmetric tetramer in solution. Interacts with CUL3; interaction is direct and forms a 5:5 heterodecamer. Component of the BCR(KCTD13) E3 ubiquitin ligase complex, at least composed of CUL3, KCTD13/BACURD1 and RBX1. Interacts with RHOA; with a preference for RhoA-GDP. Interacts with POLD2 and PCNA. Interacts with SPRTN.

It localises to the nucleus. The protein operates within protein modification; protein ubiquitination. In terms of biological role, substrate-specific adapter of a BCR (BTB-CUL3-RBX1) E3 ubiquitin-protein ligase complex required for synaptic transmission. The BCR(KCTD13) E3 ubiquitin ligase complex mediates the ubiquitination of RHOA, leading to its degradation by the proteasome, thereby regulating the actin cytoskeleton and promoting synaptic transmission. This Bos taurus (Bovine) protein is BTB/POZ domain-containing adapter for CUL3-mediated RhoA degradation protein 1 (KCTD13).